The sequence spans 271 residues: Shikimate dehydrogenase (NADP(+)) (271 aa).

Shikimate contacts are provided by residues 16-18 and T63; that span reads SRS. K67 functions as the Proton acceptor in the catalytic mechanism. Residues N88 and D104 each coordinate shikimate. NADP(+) is bound by residues 128–132, 152–157, and M215; these read GAGGA and NRTASK. Y217 lines the shikimate pocket. Position 238 (G238) interacts with NADP(+).

It belongs to the shikimate dehydrogenase family. As to quaternary structure, homodimer.

The enzyme catalyses shikimate + NADP(+) = 3-dehydroshikimate + NADPH + H(+). It participates in metabolic intermediate biosynthesis; chorismate biosynthesis; chorismate from D-erythrose 4-phosphate and phosphoenolpyruvate: step 4/7. In terms of biological role, involved in the biosynthesis of the chorismate, which leads to the biosynthesis of aromatic amino acids. Catalyzes the reversible NADPH linked reduction of 3-dehydroshikimate (DHSA) to yield shikimate (SA). In Chromohalobacter salexigens (strain ATCC BAA-138 / DSM 3043 / CIP 106854 / NCIMB 13768 / 1H11), this protein is Shikimate dehydrogenase (NADP(+)).